Reading from the N-terminus, the 142-residue chain is Sec-independent protein translocase protein TatB (142 aa).

A helical membrane pass occupies residues 2-22 (FANVGWGEMLVLVIAGLVILG). The interval 89–142 (DDSIFTGKFDQNGKSEKPEQKPEKPQSAPGPAAAVPDQPAGGRSGSTPYDTDAT) is disordered. Over residues 99–112 (QNGKSEKPEQKPEK) the composition is skewed to basic and acidic residues. Over residues 133-142 (GSTPYDTDAT) the composition is skewed to polar residues.

This sequence belongs to the TatB family. As to quaternary structure, the Tat system comprises two distinct complexes: a TatABC complex, containing multiple copies of TatA, TatB and TatC subunits, and a separate TatA complex, containing only TatA subunits. Substrates initially bind to the TatABC complex, which probably triggers association of the separate TatA complex to form the active translocon.

Its subcellular location is the cell membrane. Part of the twin-arginine translocation (Tat) system that transports large folded proteins containing a characteristic twin-arginine motif in their signal peptide across membranes. Together with TatC, TatB is part of a receptor directly interacting with Tat signal peptides. TatB may form an oligomeric binding site that transiently accommodates folded Tat precursor proteins before their translocation. This chain is Sec-independent protein translocase protein TatB, found in Mycolicibacterium vanbaalenii (strain DSM 7251 / JCM 13017 / BCRC 16820 / KCTC 9966 / NRRL B-24157 / PYR-1) (Mycobacterium vanbaalenii).